The following is a 295-amino-acid chain: Phosphatidylserine decarboxylase proenzyme (295 aa).

Active-site charge relay system; for autoendoproteolytic cleavage activity residues include aspartate 101, histidine 158, and serine 262. The Schiff-base intermediate with substrate; via pyruvic acid; for decarboxylase activity role is filled by serine 262. Residue serine 262 is modified to Pyruvic acid (Ser); by autocatalysis.

Belongs to the phosphatidylserine decarboxylase family. PSD-B subfamily. Prokaryotic type I sub-subfamily. In terms of assembly, heterodimer of a large membrane-associated beta subunit and a small pyruvoyl-containing alpha subunit. Requires pyruvate as cofactor. In terms of processing, is synthesized initially as an inactive proenzyme. Formation of the active enzyme involves a self-maturation process in which the active site pyruvoyl group is generated from an internal serine residue via an autocatalytic post-translational modification. Two non-identical subunits are generated from the proenzyme in this reaction, and the pyruvate is formed at the N-terminus of the alpha chain, which is derived from the carboxyl end of the proenzyme. The autoendoproteolytic cleavage occurs by a canonical serine protease mechanism, in which the side chain hydroxyl group of the serine supplies its oxygen atom to form the C-terminus of the beta chain, while the remainder of the serine residue undergoes an oxidative deamination to produce ammonia and the pyruvoyl prosthetic group on the alpha chain. During this reaction, the Ser that is part of the protease active site of the proenzyme becomes the pyruvoyl prosthetic group, which constitutes an essential element of the active site of the mature decarboxylase.

It is found in the cell membrane. It catalyses the reaction a 1,2-diacyl-sn-glycero-3-phospho-L-serine + H(+) = a 1,2-diacyl-sn-glycero-3-phosphoethanolamine + CO2. Its pathway is phospholipid metabolism; phosphatidylethanolamine biosynthesis; phosphatidylethanolamine from CDP-diacylglycerol: step 2/2. Functionally, catalyzes the formation of phosphatidylethanolamine (PtdEtn) from phosphatidylserine (PtdSer). This chain is Phosphatidylserine decarboxylase proenzyme, found in Pasteurella multocida (strain Pm70).